We begin with the raw amino-acid sequence, 258 residues long: MSLIDPRAIIDPSAVLAADVEVGPWSIIGAGVEIGEGTVIGPHVILKGPTRIGKHNRIYQFSSVGEDTPDMKYKGEETRLVIGDHNIIREGVTIHRGTVQDRAETTLGDHNLVMAYAHIGHDSVIGNHCILVNNTALAGHVHVDDWAILSGFTLVHQYCHIGAHSFSGMGTAIGKDVPAFVTVFGNPAEARSMNFEGMRRRGFSEEAIHALRRAYKVVYRQGLTVDQALTQLLEPAALFPEVAVFRDSIQASTRGITR.

The protein belongs to the transferase hexapeptide repeat family. LpxA subfamily. As to quaternary structure, homotrimer.

Its subcellular location is the cytoplasm. The enzyme catalyses a (3R)-hydroxyacyl-[ACP] + UDP-N-acetyl-alpha-D-glucosamine = a UDP-3-O-[(3R)-3-hydroxyacyl]-N-acetyl-alpha-D-glucosamine + holo-[ACP]. It functions in the pathway glycolipid biosynthesis; lipid IV(A) biosynthesis; lipid IV(A) from (3R)-3-hydroxytetradecanoyl-[acyl-carrier-protein] and UDP-N-acetyl-alpha-D-glucosamine: step 1/6. Involved in the biosynthesis of lipid A, a phosphorylated glycolipid that anchors the lipopolysaccharide to the outer membrane of the cell. This chain is Acyl-[acyl-carrier-protein]--UDP-N-acetylglucosamine O-acyltransferase, found in Pseudomonas fluorescens (strain SBW25).